The chain runs to 334 residues: MPFLKYWKLMGFSLTPLLLSSATINSHVIDSSFYLTKNLVESENQSPIQFNQLSRIILVQLEFDPDSIVDNTSITFNNRTLGQKALLKLRFKREFTLAIQEITELNQLVDQAIDKNTVLQNFLTLKNVERKQQWERLSYLYKLLNFDFRDPQELSLVRDLPRLLKTIFESASINFQVRMGGQLRKITLVKNNNNVFNLGQFEQFLNLDQISINLFEVEFLSFDFISDQYPSWTAKNLPVFSLFESAKNKPTIQKTNQGIQYRLRFRSNYNEQYLNKYRFSIPVVNNGKEFSVLDIQDKELTEEQKNQIAFVIKNGFFISGWYGINCCLKFNQIS.

The protein belongs to the MG414/MG415 family.

This is an uncharacterized protein from Mycoplasma pneumoniae (strain ATCC 29342 / M129 / Subtype 1) (Mycoplasmoides pneumoniae).